Here is a 307-residue protein sequence, read N- to C-terminus: Putative transcription factor bHLH086 (307 aa).

Disordered stretches follow at residues 1–49 and 167–215; these read MSLI…DHQN and HEST…QSLA. Polar residues-rich tracts occupy residues 12–28 and 183–197; these read NYIS…SPQN and GENT…SGTN. A basic motif region spans residues 207 to 220; it reads SPKDPQSLAAKNRR. One can recognise a bHLH domain in the interval 207–256; that stretch reads SPKDPQSLAAKNRRERISERLKVLQELVPNGTKVDLVTMLEKAIGYVKFL. The interval 221 to 256 is helix-loop-helix motif; that stretch reads ERISERLKVLQELVPNGTKVDLVTMLEKAIGYVKFL.

As to quaternary structure, homodimer. Forms heterodimers with RHD6. Interacts with TIFY10B/JAZ2, TIFY6A/JAZ4, TIFY5A/JAZ8, TIFY7/JAZ9 and TIFY9/JAZ10.

The protein resides in the nucleus. Its function is as follows. Transcription factor that is specifically required for the development of root hairs. Acts with RHD6 to positively regulate root hair development. Acts downstream of genes that regulate epidermal pattern formation, such as GL2. Acts with RHD6 as transcription factor that integrates a jasmonate (JA) signaling pathway that stimulates root hair growth. This is Putative transcription factor bHLH086 from Arabidopsis thaliana (Mouse-ear cress).